The sequence spans 438 residues: MPNFIDRRLNPKDKSLGNRQRFLKRAREELKRTIKERVKSGKIADVDAEQNVSMPARGVNEPAFQPDSNSGERRHVLPGNREFAAGDRIPKRGSGGGAGNAGAGTGQSEDEFQFVLSREEVLDLFFEDLELPDMVKLNLKESVTFKRRRAGFSASGSPTNINVGRTMRNSYGRRIALRRPSRREIEALADEIAGLETEPRGRIKHRQRLEELRQKLDRLERRRRRIPYVDPVDIRFNRFEPQPLPNASAVMFCLMDVSASMGEREKDLAKRFFVLLHLFLKRRYERIDIVFIRHTDEAGEVDENTFFYSKQSGGTVVSTALEEMLRVIRERYPAHEWNIYAAQASDGENISGDSERCASLLHDELMGLCQYYAYVEIIDERETEIFGTTDNGTSLWRAYRTVDGEWPNFQMTRIAKPADIYPVFRKLFGKQPEMQLRK.

The interval 55–107 is disordered; it reads PARGVNEPAFQPDSNSGERRHVLPGNREFAAGDRIPKRGSGGGAGNAGAGTGQ. Gly residues predominate over residues 93-105; the sequence is GSGGGAGNAGAGT.

Belongs to the UPF0229 family.

The sequence is that of UPF0229 protein R01398 from Rhizobium meliloti (strain 1021) (Ensifer meliloti).